A 429-amino-acid chain; its full sequence is tRNA threonylcarbamoyladenosine dehydratase 1 (429 aa).

The next 2 helical transmembrane spans lie at 3–23 (NNTW…TQLA) and 74–94 (EQYI…TMLI). Serine 259 is modified (phosphoserine). The helical transmembrane segment at 279–299 (LPELGTMPGIFGLSIATWILT) threads the bilayer.

This sequence belongs to the HesA/MoeB/ThiF family.

The protein localises to the mitochondrion outer membrane. In terms of biological role, catalyzes the ATP-dependent dehydration of threonylcarbamoyladenosine at position 37 (t(6)A37) to form cyclic t(6)A37 (ct(6)A37) in tRNAs that read codons beginning with adenine. This chain is tRNA threonylcarbamoyladenosine dehydratase 1 (TCD1), found in Saccharomyces cerevisiae (strain ATCC 204508 / S288c) (Baker's yeast).